Reading from the N-terminus, the 377-residue chain is MSRTLDYTKELIRRASVTPEDQGCQAWIIEKLEVLGFKCETLWFEEVRNLWARRGTQGPVFAFAGHTDVVPTGDVTAWKYDPFTPTEEGDLLYGRGAADMKGSIAAMIVAMEDFIAAHPDHNGSLAFLITADEEGPSVNGTVKVVEHLQARQEHIDYCLVGEPSSTNTVGDVIKNGRRGSLGAKLTVKGIQGHVAYPHLARNPIHDVAPALAELSATEWDQGNDFFPATSFQISNINGGTGATNVIPGTCEIIFNFRFSTELTDAILRERVEAILDKHGLDYDLQWTLSGQPFLTDRGALVDAAVGAIRDVTELDTELSTAGGTSDGRFIAPTGTQVVELGPTNATIHKVDEHTSISELDTLTQIYQRLLQHLMTTG.

His66 contributes to the Zn(2+) binding site. The active site involves Asp68. Asp99 contributes to the Zn(2+) binding site. Catalysis depends on Glu133, which acts as the Proton acceptor. The Zn(2+) site is built by Glu134, Glu162, and His348.

The protein belongs to the peptidase M20A family. DapE subfamily. In terms of assembly, homodimer. It depends on Zn(2+) as a cofactor. The cofactor is Co(2+).

The enzyme catalyses N-succinyl-(2S,6S)-2,6-diaminopimelate + H2O = (2S,6S)-2,6-diaminopimelate + succinate. It participates in amino-acid biosynthesis; L-lysine biosynthesis via DAP pathway; LL-2,6-diaminopimelate from (S)-tetrahydrodipicolinate (succinylase route): step 3/3. In terms of biological role, catalyzes the hydrolysis of N-succinyl-L,L-diaminopimelic acid (SDAP), forming succinate and LL-2,6-diaminopimelate (DAP), an intermediate involved in the bacterial biosynthesis of lysine and meso-diaminopimelic acid, an essential component of bacterial cell walls. The protein is Succinyl-diaminopimelate desuccinylase of Alcanivorax borkumensis (strain ATCC 700651 / DSM 11573 / NCIMB 13689 / SK2).